We begin with the raw amino-acid sequence, 296 residues long: Formylmethanofuran--tetrahydromethanopterin formyltransferase (296 aa).

It belongs to the FTR family. As to quaternary structure, homotetramer composed of two dimers. Dimerization is sufficient for enzyme activity, but tetramerization is required for high thermostability.

It localises to the cytoplasm. The enzyme catalyses N-formylmethanofuran + 5,6,7,8-tetrahydromethanopterin + H(+) = N(5)-formyl-5,6,7,8-tetrahydromethanopterin + methanofuran. Its pathway is one-carbon metabolism; methanogenesis from CO(2); 5,10-methenyl-5,6,7,8-tetrahydromethanopterin from CO(2): step 2/3. Requires high salt concentrations for activity and thermostability; 1.5-1.8 M KH(2)PO(4) stimulates activity while stabilizing the enzyme. Functionally, catalyzes the reversible transfer of a formyl group from formylmethanofuran (formyl-MFR) to tetrahydromethanopterin (H(4)MPT) to produce 5-formyl tetrahydromethanopterin (5-formyl-H(4)MPT) and methanofuran (MFR). Acts via a ternary-complex mechanism. Uses N-furfurylformamide much less efficiently, does not use N-methylformamide or formamide. Protein overexpressed in E.coli has very similar properties to enzyme purified from M.kandleri. The polypeptide is Formylmethanofuran--tetrahydromethanopterin formyltransferase (Methanopyrus kandleri (strain AV19 / DSM 6324 / JCM 9639 / NBRC 100938)).